An 831-amino-acid chain; its full sequence is uncharacterized protein (831 aa).

Catalysis depends on His-787, which acts as the Tele-phosphohistidine intermediate.

It belongs to the PEP-utilizing enzyme family.

This is an uncharacterized protein from Bacillus subtilis (strain 168).